Consider the following 482-residue polypeptide: Nuclear transcription factor Y subunit nfya-1 (482 aa).

Positions 1–160 are disordered; it reads MNGASRGDVQ…NGSYIQYNEP (160 aa). Over residues 72-93 the composition is skewed to polar residues; sequence SSPNVQTQCHQPPVVRSQTHQA. The segment covering 94 to 110 has biased composition (low complexity); sequence SVSQTTPTQTTPSQYTP. Composition is skewed to polar residues over residues 126–135 and 144–160; these read HVTPSQQQRI and VSQSQPQNGSYIQYNEP. The short motif at 306–329 is the Subunit association domain (SAD) element; the sequence is LVNPKQFNRIMRRREMRQQLEASG. Positions 336–361 form a DNA-binding region, NFYA/HAP2-type; that stretch reads QKYLHESRHLHALKRKRGLDGRFDNT. The segment at 344–414 is disordered; sequence HLHALKRKRG…QPKGGIVNSS (71 aa). Over residues 353–362 the composition is skewed to basic and acidic residues; the sequence is GLDGRFDNTK. A compositionally biased stretch (low complexity) spans 363–375; the sequence is TAESSSMVSSTTS.

This sequence belongs to the NFYA/HAP2 subunit family. In terms of assembly, forms a heterotrimeric transcription factor complex (nfya-1-NF-Y complex) composed of nfya-1, nfyb-1 and nfyc-1, which binds to 5'-CCAAT-3' box motif in the promoters of its target genes. Interacts with the nfyb-1 and nfyc-1 dimer; the interaction is required for subsequent binding to the 5'-CCAAT-3' box motif in DNA. Does not interact with either nfyb-1 or nfyc-1 in their monomeric form. Interacts with mes-3. As to expression, expressed in certain parts of the gonads with high expression in fertilized oocytes in the uterus and mature oocytes from the distal to the proximal arm of the gonad, but weak expression in the syncytial ovaries and immature oocytes at the beginning of the proximal arm of the gonad. Highly expressed in the head ganglia neurons and the developing hermaphrodite vulva and male tail. Weakly expressed in most somatic cells. Not expressed in the intestine, the hypodermis, body wall muscle surrounding the pseudocoelomic space, secretory cells in the pharyngeal terminal bulb wall, in the small ganglia surrounding the pharynx and in the neurons running anteriorly to the sensory organs in the head.

The protein resides in the nucleus. Component of the sequence-specific heterotrimeric transcription factor (nfya-1-NF-Y) which specifically recognizes a 5'-CCAAT-3' box motif found in the promoters of its target genes to regulate their expression and control cellular identity in particular tissue types. In association with the components in the nfya-1-NF-Y complex, represses the expression of the T-box transcription factor tbx-2 throughout larval development, which most likely restricts its expression to certain tissues. May act to repress txb-2 expression in conjunction with tbx-2 itself, which has an autoregulatory role. With the components in this complex, negatively regulates the expression of the homeobox protein egl-5 to spatially restrict its expression in tissues such as the head. May regulate egl-5 expression in association with the mes-2-mes-3-mes-6 complex. In Caenorhabditis elegans, this protein is Nuclear transcription factor Y subunit nfya-1.